A 312-amino-acid polypeptide reads, in one-letter code: Homoserine O-succinyltransferase (312 aa).

C142 (acyl-thioester intermediate) is an active-site residue. Residues K163 and S192 each contribute to the substrate site. H235 acts as the Proton acceptor in catalysis. E237 is an active-site residue. Residue R249 participates in substrate binding.

It belongs to the MetA family.

Its subcellular location is the cytoplasm. It catalyses the reaction L-homoserine + succinyl-CoA = O-succinyl-L-homoserine + CoA. The protein operates within amino-acid biosynthesis; L-methionine biosynthesis via de novo pathway; O-succinyl-L-homoserine from L-homoserine: step 1/1. In terms of biological role, transfers a succinyl group from succinyl-CoA to L-homoserine, forming succinyl-L-homoserine. This is Homoserine O-succinyltransferase from Shewanella halifaxensis (strain HAW-EB4).